Here is a 471-residue protein sequence, read N- to C-terminus: Phosphatidylserine synthase 2 (471 aa).

Residues 1–26 (MRRGERRVAGGSGSESPLLEGRRSTE) are disordered. Residues 1-40 (MRRGERRVAGGSGSESPLLEGRRSTESEVYDDGTNTFFWR) are Cytoplasmic-facing. A phosphoserine mark is found at Ser-12, Ser-14, and Ser-16. The helical transmembrane segment at 41-61 (AHTLTVLFILTCALGYVTLLE) threads the bilayer. Residues 62–74 (ETPQDTAYNTKRG) lie on the Lumenal side of the membrane. A helical transmembrane segment spans residues 75–95 (IVASILVFLCFGVTQAKDGPF). Residues 96-104 (SRPHPAYWR) are Cytoplasmic-facing. A helical transmembrane segment spans residues 105 to 125 (FWLCVSVVYELFLIFILFQTV). The Lumenal portion of the chain corresponds to 126–291 (HDGRQFLKYV…EWKPASSLHR (166 aa)). The N-linked (GlcNAc...) asparagine glycan is linked to Asn-159. Residues 292–312 (WLAVCGIILVFLLAELNTFYL) traverse the membrane as a helical segment. Position 313 (Lys-313) is a topological domain, cytoplasmic. The helical transmembrane segment at 314–334 (FVLWMPPEHYLVLLRLVFFVN) threads the bilayer. The Lumenal segment spans residues 335-354 (VGGVAMREIYDFMDELKPHR). A helical membrane pass occupies residues 355 to 375 (KLGQQAWLVAAITVTELLIVV). Residues 376–381 (KYDPHT) are Cytoplasmic-facing. A helical transmembrane segment spans residues 382–402 (LTLSLPFYISQCWTLGSILVL). Topologically, residues 403–471 (TWTVWRFFLR…PAEEGPSAAS (69 aa)) are lumenal. The segment at 423 to 471 (RQKQQSHQAINNGDGHPGPEDDLPGTGTAEEEGTTNDGVPAEEGPSAAS) is disordered.

It belongs to the phosphatidyl serine synthase family.

It localises to the endoplasmic reticulum membrane. It carries out the reaction a 1,2-diacyl-sn-glycero-3-phosphoethanolamine + L-serine = a 1,2-diacyl-sn-glycero-3-phospho-L-serine + ethanolamine. It catalyses the reaction 1-hexadecanoyl-2-(9Z-octadecenoyl)-sn-glycero-3-phosphoethanolamine + L-serine = 1-hexadecanoyl-2-(9Z-octadecenoyl)-sn-glycero-3-phospho-L-serine + ethanolamine. The catalysed reaction is 1-hexadecanoyl-2-(4Z,7Z,10Z,13Z,16Z,19Z-docosahexaenoyl)-sn-glycero-3-phosphoethanolamine + L-serine = 1-hexadecanoyl-2-(4Z,7Z,10Z,13Z,16Z,19Z-docosahexaenoyl)-sn-glycero-3-phosphoserine + ethanolamine. The enzyme catalyses 1-octadecanoyl-2-(5Z,8Z,11Z,14Z)-eicosatetraenoyl-sn-glycero-3-phosphoethanolamine + L-serine = 1-octadecanoyl-2-(5Z,8Z,11Z,14Z)-eicosatetraenoyl-sn-glycero-3-phosphoserine + ethanolamine. It carries out the reaction 1-octadecanoyl-2-(4Z,7Z,10Z,13Z,16Z,19Z-docosahexaenoyl)-sn-glycero-3-phosphoethanolamine + L-serine = 1-octadecanoyl-2-(4Z,7Z,10Z,13Z,16Z,19Z-docosahexaenoyl)-sn-glycero-3-phosphoserine + ethanolamine. It catalyses the reaction 1-(1Z-octadecenyl)-2-(4Z,7Z,10Z,13Z,16Z,19Z-docosahexaenoyl)-sn-glycero-3-phosphoethanolamine + L-serine = 1-(1Z-octadecenyl)-2-(4Z,7Z,10Z,13Z,16Z,19Z-docosahexaenoyl)-sn-glycero-3-phospho-L-serine + ethanolamine. The catalysed reaction is 1-octadecanoyl-2-(9Z-octadecenoyl)-sn-glycero-3-phosphoethanolamine + L-serine = 1-octadecanoyl-2-(9Z-octadecenoyl)-sn-glycero-3-phospho-L-serine + ethanolamine. The enzyme catalyses 1-(1Z-octadecenyl)-2-(9Z-octadecenoyl)-sn-glycero-3-phosphoethanolamine + L-serine = 1-(1Z-octadecenyl)-2-(9Z-octadecenoyl)-sn-glycero-3-phospho-L-serine + ethanolamine. It carries out the reaction 1-(1Z-octadecenyl)-2-(5Z,8Z,11Z,14Z- eicosatetraenoyl)-sn-glycero-3-phosphoethanolamine + L-serine = 1-(1Z-octadecenyl)-2-(5Z,8Z,11Z,14Z-eicosatetraenoyl)-sn-glycero-3-phospho-L-serine + ethanolamine. It functions in the pathway phospholipid metabolism; phosphatidylserine biosynthesis. Catalyzes a base-exchange reaction in which the polar head group of phosphatidylethanolamine (PE) or phosphatidylcholine (PC) is replaced by L-serine. Catalyzes the conversion of phosphatatidylethanolamine and does not act on phosphatidylcholine. Can utilize both phosphatidylethanolamine (PE) plasmalogen and diacyl PE as substrate and the latter is six times better utilized, indicating the importance of an ester linkage at the sn-1 position. Although it shows no sn-1 fatty acyl preference, exhibits significant preference towards docosahexaenoic acid (22:6n-3) compared with 18:1 or 20:4 at the sn-2 position. This Rattus norvegicus (Rat) protein is Phosphatidylserine synthase 2 (Ptdss2).